The sequence spans 119 residues: Phosphoribosyl-AMP cyclohydrolase (119 aa).

Asp77 contacts Mg(2+). Residue Cys78 participates in Zn(2+) binding. Mg(2+) contacts are provided by Asp79 and Asp81. Zn(2+)-binding residues include Cys94 and Cys101.

This sequence belongs to the PRA-CH family. As to quaternary structure, homodimer. It depends on Mg(2+) as a cofactor. Zn(2+) is required as a cofactor.

It is found in the cytoplasm. The catalysed reaction is 1-(5-phospho-beta-D-ribosyl)-5'-AMP + H2O = 1-(5-phospho-beta-D-ribosyl)-5-[(5-phospho-beta-D-ribosylamino)methylideneamino]imidazole-4-carboxamide. Its pathway is amino-acid biosynthesis; L-histidine biosynthesis; L-histidine from 5-phospho-alpha-D-ribose 1-diphosphate: step 3/9. Functionally, catalyzes the hydrolysis of the adenine ring of phosphoribosyl-AMP. The polypeptide is Phosphoribosyl-AMP cyclohydrolase (Cereibacter sphaeroides (strain KD131 / KCTC 12085) (Rhodobacter sphaeroides)).